The following is a 117-amino-acid chain: uncharacterized protein (117 aa).

This is an uncharacterized protein from Escherichia coli O6:H1 (strain CFT073 / ATCC 700928 / UPEC).